Here is a 935-residue protein sequence, read N- to C-terminus: MSAHTYKKFENSTSGDLPDKMTIYQDCMNTFNESPVNSKRCRLLISRLLRLLAQGETFPQNEATALFFSISKLFQHQNDPLRQAVYLAIKELSGISEDVLMATSSIMKDVQNGSDLIKPDAIRSLTYVLDESTAFSAERLLKSAVVSRHPSISSAALCTSYHLLPISEVTIRRFTNETQEAVLDLKQFPNQHGNSEYYPNSTYISQYHALGLLYQLKKTDKMALLKLVRHFSENNSMKNQLAKVELVKIVNDLIYRDPQLFSQFRPLLSDWLSNKFESVQLETAKLITSFATRNSRLVAPELYAAAISALQSLLTVPRVSSRFAALRILNRISMVSPEKIVVCNPELESLINDSNRNISTYAITTLLKTGTSKNISSLISTITNFIHDVSDDFKIIIIDAVRTLSLNFPQEWKSILNFLIDVLKNSEGGFKFKNSIVEALIDIVSFVPQSKELALENLCDFIEDCEFNEILVRILHLLGKEGPSAPNPSLYVRHIYNRVVLENSIIRSAAVVALSKFALTKNDPTLYESIISLLKRIANDKDDEVRDRATIALEFIDSARNKDDVIAQNLIESKYFYDIPSLESKLSSYISSNTDSFATAFDVNQVRKFTEDEMKAINLKRKQEQIFNQKSETTLDTTPEAESVPEKRADANSFAGPNLDDHQEDLLATKYADELLSIEQIKPFGQLVNSSRAISLTEPEAEFVVRGVKHLFKDNVVLQFNITNTLTDIALDNVSVVCTPEISDEAELEELFTLQVDRLLPSEEAACYVAFKKLDEIVMEGFLNNLTFTTKEINPDTNEPFDGDEGFQDEYEIDSIFLNAGDYVKSSFTGNFSATFDELPCEEVAVFNIQEDLSIQEVVDKIILNSSCLPVESTQFAPSDSNSHTLKLFGKSALTGSKVALQIKMIKSSKGLALKVHGKGEDSLLCSDLVNGLMQ.

HEAT repeat units follow at residues 258–296, 337–372, 373–410, 412–449, and 524–562; these read PQLF…RNSR, PEKI…TGTS, KNIS…NFPQ, WKSI…FVPQ, and PTLY…ARNK. Residues 630–656 are disordered; that stretch reads KSETTLDTTPEAESVPEKRADANSFAG. Phosphothreonine is present on T638. Phosphoserine is present on S643. A Glycyl lysine isopeptide (Lys-Gly) (interchain with G-Cter in ubiquitin) cross-link involves residue K647. A Phosphoserine modification is found at S653.

Belongs to the COPG family. Oligomeric complex that consists of at least the alpha, beta, beta', gamma, delta, epsilon and zeta subunits. Interacts (via C-terminus) with GEA1 (via N-terminal region) and KEI1 (via C-terminal region).

It localises to the cytoplasm. The protein resides in the golgi apparatus membrane. Its subcellular location is the cytoplasmic vesicle. The protein localises to the COPI-coated vesicle membrane. It is found in the endosome. In terms of biological role, the coatomer is a cytosolic protein complex that binds to dilysine motifs and reversibly associates with Golgi non-clathrin-coated vesicles, which further mediate biosynthetic protein transport from the ER, via the Golgi up to the trans Golgi network. Coatomer complex is required for budding from Golgi membranes, and is essential for the retrograde Golgi-to-ER transport of dilysine-tagged proteins. The polypeptide is Coatomer subunit gamma (SEC21) (Saccharomyces cerevisiae (strain ATCC 204508 / S288c) (Baker's yeast)).